We begin with the raw amino-acid sequence, 100 residues long: Tuberoinfundibular peptide of 39 residues (100 aa).

The first 30 residues, 1 to 30 (METRQVSRSPRVRLLLLLLLLLVVPWGVRT), serve as a signal peptide directing secretion. A propeptide spanning residues 31 to 59 (ASGVALPPVGVLSLRPPGRAWADPATPRP) is cleaved from the precursor.

The protein belongs to the parathyroid hormone family. In terms of assembly, ligand of high affinity for the PTH2 receptor (PTH2R).

The protein localises to the secreted. Functionally, plays a role as a potent and selective agonist of PTH2R resulting in adenyl cyclase activation and intracellular calcium levels elevation. Induces protein kinase C beta activation, recruitment of beta-arrestin and PTH2R internalization. May inhibit cell proliferation via its action of PTH2R activation. Neuropeptide which may also have a role in spermatogenesis. May activate nociceptors and nociceptive circuits. The chain is Tuberoinfundibular peptide of 39 residues (PTH2) from Bos taurus (Bovine).